Consider the following 444-residue polypeptide: Putative permease IIC component YwbA (444 aa).

Residues 8 to 421 (MEEKIMPVAG…LITCAIYYPF (414 aa)) enclose the PTS EIIC type-3 domain. 10 helical membrane passes run 31 to 51 (GIIL…LTSL), 72 to 92 (LGYP…FGIA), 104 to 124 (LSAG…EVPF), 138 to 158 (GIPI…IALF), 187 to 207 (FVAL…RLLI), 223 to 243 (LGTP…AEFV), 246 to 266 (LLWS…APIW), 291 to 311 (FFQI…VLTM), 349 to 371 (PLLI…IGMS), and 402 to 422 (SGAV…YPFF).

The protein localises to the cell membrane. In terms of biological role, the phosphoenolpyruvate-dependent sugar phosphotransferase system (PTS), a major carbohydrate active -transport system, catalyzes the phosphorylation of incoming sugar substrates concomitant with their translocation across the cell membrane. The chain is Putative permease IIC component YwbA (ywbA) from Bacillus subtilis (strain 168).